The following is a 334-amino-acid chain: 4-hydroxy-3-methylbut-2-enyl diphosphate reductase (334 aa).

Position 19 (Cys19) interacts with [4Fe-4S] cluster. 2 residues coordinate (2E)-4-hydroxy-3-methylbut-2-enyl diphosphate: His48 and His84. His48 and His84 together coordinate dimethylallyl diphosphate. Isopentenyl diphosphate is bound by residues His48 and His84. Residue Cys106 coordinates [4Fe-4S] cluster. Position 134 (His134) interacts with (2E)-4-hydroxy-3-methylbut-2-enyl diphosphate. His134 provides a ligand contact to dimethylallyl diphosphate. His134 contacts isopentenyl diphosphate. Residue Glu136 is the Proton donor of the active site. Residue Thr175 participates in (2E)-4-hydroxy-3-methylbut-2-enyl diphosphate binding. Residue Cys205 coordinates [4Fe-4S] cluster. 4 residues coordinate (2E)-4-hydroxy-3-methylbut-2-enyl diphosphate: Ser233, Ser234, Asn235, and Ser278. 4 residues coordinate dimethylallyl diphosphate: Ser233, Ser234, Asn235, and Ser278. Residues Ser233, Ser234, Asn235, and Ser278 each coordinate isopentenyl diphosphate.

The protein belongs to the IspH family. [4Fe-4S] cluster is required as a cofactor.

It carries out the reaction isopentenyl diphosphate + 2 oxidized [2Fe-2S]-[ferredoxin] + H2O = (2E)-4-hydroxy-3-methylbut-2-enyl diphosphate + 2 reduced [2Fe-2S]-[ferredoxin] + 2 H(+). The enzyme catalyses dimethylallyl diphosphate + 2 oxidized [2Fe-2S]-[ferredoxin] + H2O = (2E)-4-hydroxy-3-methylbut-2-enyl diphosphate + 2 reduced [2Fe-2S]-[ferredoxin] + 2 H(+). It functions in the pathway isoprenoid biosynthesis; dimethylallyl diphosphate biosynthesis; dimethylallyl diphosphate from (2E)-4-hydroxy-3-methylbutenyl diphosphate: step 1/1. Its pathway is isoprenoid biosynthesis; isopentenyl diphosphate biosynthesis via DXP pathway; isopentenyl diphosphate from 1-deoxy-D-xylulose 5-phosphate: step 6/6. Functionally, catalyzes the conversion of 1-hydroxy-2-methyl-2-(E)-butenyl 4-diphosphate (HMBPP) into a mixture of isopentenyl diphosphate (IPP) and dimethylallyl diphosphate (DMAPP). Acts in the terminal step of the DOXP/MEP pathway for isoprenoid precursor biosynthesis. In Chelativorans sp. (strain BNC1), this protein is 4-hydroxy-3-methylbut-2-enyl diphosphate reductase.